Reading from the N-terminus, the 283-residue chain is MQINVVKTFLFALAASSVSALAVDTEFRCGAPEPSEELIEASAIMAVAEAEAAANGTLAARQSALTIDTYVHVVATSTSASAGYLSDATIQQQLRVMNEDYAPSGIQFVLKGTDRTVNANWARDSGETAMKTALRKGTYKDLNLYFLSSIPGGILGYCYFPASATTSTVRLDGCTIASGTVPGGSISRFNLGKTAVHEVGHWFGLYHTFQGGCNGQGDLVDDTPAQASASSGCPIGRDSCPNQPGLDPIHNYMDYSDDSCYEEFTPGQNARMSSMFAQFRAGK.

Positions 1-22 (MQINVVKTFLFALAASSVSALA) are cleaved as a signal peptide. N-linked (GlcNAc...) asparagine glycosylation is present at N55. Residue H197 participates in Zn(2+) binding. E198 is an active-site residue. H201 contributes to the Zn(2+) binding site. C233 and C260 are joined by a disulfide.

This sequence belongs to the peptidase M43B family.

The protein localises to the secreted. Secreted metalloproteinase that allows assimilation of proteinaceous substrates. The sequence is that of Extracellular metalloprotease MGG_08041 from Pyricularia oryzae (strain 70-15 / ATCC MYA-4617 / FGSC 8958) (Rice blast fungus).